Here is a 153-residue protein sequence, read N- to C-terminus: Salivary C-type lectin 1 (153 aa).

Positions 1-19 (MIFSLYLIVAISLADLTAA) are cleaved as a signal peptide. One can recognise a C-type lectin domain in the interval 26–151 (KNRFCFPNVV…CSSTRRFVCE (126 aa)). 2 disulfide bridges follow: C45–C150 and C122–C142.

It depends on Ca(2+) as a cofactor. In terms of tissue distribution, expressed in female salivary gland. Not detected or low-level expression in female midgut and fat body.

The protein localises to the secreted. In terms of biological role, salivary protein with carbohydrate-binding activity; exibits high affinity for D-mannose. Agglutinates host erythrocytes. Probably participates in mosquito innate immune responses to prevent microorganism multiplication in sugar and blood meals. Functionally, (Microbial infection) Agglutinates Staphylococcus aureus in vitro. (Microbial infection) Agglutinates Candida albicans in vitro. Its function is as follows. (Microbial infection) Does not agglutinate Escherichia coli in vitro. This Aedes albopictus (Asian tiger mosquito) protein is Salivary C-type lectin 1.